The sequence spans 401 residues: Nicotinate phosphoribosyltransferase (401 aa).

His224 bears the Phosphohistidine; by autocatalysis mark.

Belongs to the NAPRTase family. In terms of processing, transiently phosphorylated on a His residue during the reaction cycle. Phosphorylation strongly increases the affinity for substrates and increases the rate of nicotinate D-ribonucleotide production. Dephosphorylation regenerates the low-affinity form of the enzyme, leading to product release.

The catalysed reaction is nicotinate + 5-phospho-alpha-D-ribose 1-diphosphate + ATP + H2O = nicotinate beta-D-ribonucleotide + ADP + phosphate + diphosphate. It functions in the pathway cofactor biosynthesis; NAD(+) biosynthesis; nicotinate D-ribonucleotide from nicotinate: step 1/1. In terms of biological role, catalyzes the synthesis of beta-nicotinate D-ribonucleotide from nicotinate and 5-phospho-D-ribose 1-phosphate at the expense of ATP. The protein is Nicotinate phosphoribosyltransferase of Pseudomonas putida (strain ATCC 700007 / DSM 6899 / JCM 31910 / BCRC 17059 / LMG 24140 / F1).